The primary structure comprises 330 residues: Aspartate--ammonia ligase (330 aa).

The protein belongs to the class-II aminoacyl-tRNA synthetase family. AsnA subfamily.

Its subcellular location is the cytoplasm. It catalyses the reaction L-aspartate + NH4(+) + ATP = L-asparagine + AMP + diphosphate + H(+). It participates in amino-acid biosynthesis; L-asparagine biosynthesis; L-asparagine from L-aspartate (ammonia route): step 1/1. The protein is Aspartate--ammonia ligase of Streptococcus pyogenes serotype M49 (strain NZ131).